A 397-amino-acid chain; its full sequence is Multidrug resistance protein MdtH (397 aa).

10 helical membrane-spanning segments follow: residues 11-31 (WFLALDSLLVILGFFVVMPMI), 71-91 (FGARPLIVGGMLLRAAGFASL), 94-114 (AQSGLELILSCIISGLGGCLF), 137-157 (LLMMLESAGAVVGALLGSWLL), 163-183 (YVCLLGAGLFVCAALCNLLIL), 211-231 (LVLILSGYYALWVQVMLIFPI), 242-262 (AVGWMYTLETAISLTLLYPLA), 291-311 (FATTLPAVFVLLACFYLGIVI), 338-358 (LGLALGGMTGYVGGGALHDYA), and 366-386 (LPWLVLGTVGVTTLLLLVNCF).

The protein belongs to the major facilitator superfamily. DHA1 family. MdtH (TC 2.A.1.2.21) subfamily.

It is found in the cell inner membrane. In Aeromonas salmonicida (strain A449), this protein is Multidrug resistance protein MdtH.